We begin with the raw amino-acid sequence, 499 residues long: GTPase Der (499 aa).

The 164-residue stretch at 3-166 (PVIALVGRPN…QALGIFPKDN (164 aa)) folds into the EngA-type G 1 domain. GTP-binding positions include 9–16 (GRPNVGKS), 56–60 (DTGGI), and 118–121 (NKVD). The segment at 166–199 (NADENAEGEEGGELAEGEEVVAEGQEPKRIPGPS) is disordered. Residues 168–186 (DENAEGEEGGELAEGEEVV) show a composition bias toward acidic residues. Residues 190–199 (QEPKRIPGPS) are compositionally biased toward basic and acidic residues. The 174-residue stretch at 204–377 (IKIAIIGRPN…SVQAAFKSAI (174 aa)) folds into the EngA-type G 2 domain. GTP-binding positions include 210–217 (GRPNVGKS), 257–261 (DTAGV), and 322–325 (NKWD). The KH-like domain maps to 378-462 (TRWPTSRLTQ…PIRIEYKGGD (85 aa)). The segment covering 459–472 (KGGDNPYEGKKNTL) has biased composition (basic and acidic residues). The segment at 459-499 (KGGDNPYEGKKNTLTDRQVNKKRRLMSHHKKAEKKRRDKKR) is disordered. Residues 478-499 (NKKRRLMSHHKKAEKKRRDKKR) show a composition bias toward basic residues.

This sequence belongs to the TRAFAC class TrmE-Era-EngA-EngB-Septin-like GTPase superfamily. EngA (Der) GTPase family. In terms of assembly, associates with the 50S ribosomal subunit.

In terms of biological role, GTPase that plays an essential role in the late steps of ribosome biogenesis. The protein is GTPase Der of Stutzerimonas stutzeri (strain A1501) (Pseudomonas stutzeri).